Consider the following 176-residue polypeptide: Macro domain-containing protein mll7730 (176 aa).

Residues 1 to 174 form the Macro domain; it reads MSKALDRIRI…LYLRAVAALR (174 aa).

It belongs to the MacroD-type family.

This is Macro domain-containing protein mll7730 from Mesorhizobium japonicum (strain LMG 29417 / CECT 9101 / MAFF 303099) (Mesorhizobium loti (strain MAFF 303099)).